The following is a 93-amino-acid chain: MLKPLGDRVVLEVEEKEQKVGGFVIAGAGQDATKTAKVVAVGEGIRTLNGELVAPSVKAGDTVLVESHVGTEVKDGEEKYLVVNEVNILAIVE.

It belongs to the GroES chaperonin family. Heptamer of 7 subunits arranged in a ring. Interacts with the chaperonin GroEL.

It is found in the cytoplasm. Functionally, together with the chaperonin GroEL, plays an essential role in assisting protein folding. The GroEL-GroES system forms a nano-cage that allows encapsulation of the non-native substrate proteins and provides a physical environment optimized to promote and accelerate protein folding. GroES binds to the apical surface of the GroEL ring, thereby capping the opening of the GroEL channel. This Streptococcus intermedius protein is Co-chaperonin GroES.